A 93-amino-acid polypeptide reads, in one-letter code: Small ribosomal subunit protein uS19 (93 aa).

It belongs to the universal ribosomal protein uS19 family.

Functionally, protein S19 forms a complex with S13 that binds strongly to the 16S ribosomal RNA. The polypeptide is Small ribosomal subunit protein uS19 (Phytoplasma australiense).